Here is a 462-residue protein sequence, read N- to C-terminus: MADGEEPEKKRRRIEELLAEKMAVDGGCGDTGDWEGRWNHVKKFLERSGPFTHPDFEPSTESLQFLLDTCKVLVIGAGGLGCELLKNLALSGFRQIHVIDMDTIDVSNLNRQFLFRPKDVGRPKAEVAAEFLNDRVPNCNVVPHFNKIQDFNDTFYRQFHIIVCGLDSIIARRWINGMLISLLNYEDGVLDPSSIVPLIDGGTEGFKGNARVILPGMTACIECTLELYPPQVNFPMCTIASMPRLPEHCIEYVRMLQWPKEQPFGDGVPLDGDDPEHIQWIFQKSIERASQYNIRGVTYRLTQGVVKRIIPAVASTNAVIAAVCATEVFKIATSAYIPLNNYLVFNDVDGLYTYTFEAERKENCPACSQLPQNIQFSPSAKLQEVLDYLTNSASLQMKSPAITATLEGKNRTLYLQSVTSIEERTRPNLSKTLKELGLVDGQELAVADVTTPQTVLFKLHFT.

Alanine 2 bears the N-acetylalanine mark. Positions 53–70 (HPDFEPSTESLQFLLDTC) are interaction with UBE2M N-terminus. ATP contacts are provided by residues 100 to 124 (DMDTIDVSNLNRQFLFRPKDVGRPK) and 148 to 171 (IQDFNDTFYRQFHIIVCGLDSIIA). Interaction with UBE2M N-terminus regions lie at residues 157–161 (RQFHI) and 192–217 (PSSIVPLIDGGTEGFKGNARVILPGM). The interval 227 to 229 (LYP) is interaction with NEDD8. The Glycyl thioester intermediate role is filled by cysteine 237. 2 interaction with NAE1 regions span residues 242 to 248 (MPRLPEH) and 292 to 295 (YNIR). The tract at residues 331–338 (IATSAYIP) is interaction with UBE2M N-terminus. Residues 352-357 (YTYTFE) are interaction with NEDD8. An interaction with UBE2M core domain region spans residues 368–462 (SQLPQNIQFS…QTVLFKLHFT (95 aa)).

The protein belongs to the ubiquitin-activating E1 family. UBA3 subfamily. In terms of assembly, heterodimer of UBA3 and NAE1. Interacts with NEDD8, UBE2F and UBE2M. Binds ESR1 and ESR2 with bound steroid ligand. Interacts with TBATA.

The enzyme catalyses ATP + [NEDD8 protein] + [E1 NEDD8-activating enzyme]-L-cysteine = AMP + diphosphate + [E1 NEDD8-activating enzyme]-S-[NEDD8 protein]-yl-L-cysteine.. Its pathway is protein modification; protein neddylation. With respect to regulation, binding of TP53BP2 to the regulatory subunit NAE1 decreases activity. Catalytic subunit of the dimeric UBA3-NAE1 E1 enzyme. E1 activates NEDD8 by first adenylating its C-terminal glycine residue with ATP, thereafter linking this residue to the side chain of the catalytic cysteine, yielding a NEDD8-UBA3 thioester and free AMP. E1 finally transfers NEDD8 to the catalytic cysteine of UBE2M. Down-regulates steroid receptor activity. Necessary for cell cycle progression. This is NEDD8-activating enzyme E1 catalytic subunit (Uba3) from Mus musculus (Mouse).